A 543-amino-acid polypeptide reads, in one-letter code: Gap junction alpha-10 protein (543 aa).

At 1–16 (MGDWNLLGGILEEVHS) the chain is on the cytoplasmic side. The chain crosses the membrane as a helical span at residues 17 to 37 (HSTIVGKIWLTILFIFRMLVL). The Extracellular segment spans residues 38 to 76 (RVAAEDVWDDEQSAFACNTRQPGCNNICYDDAFPISLIR). A helical transmembrane segment spans residues 77–97 (FWVLQIIFVSSPSLVYMGHAL). At 98–165 (YRLRAFEKDR…TYVLHILTRS (68 aa)) the chain is on the cytoplasmic side. A helical membrane pass occupies residues 166-186 (VLEVGFMIGQYILYGFQMHPL). The Extracellular segment spans residues 187–209 (YKCTQPPCPNAVDCFVSRPTEKT). A helical transmembrane segment spans residues 210–230 (IFMLFMHSIAAISLLLNILEI). Residues 231-543 (FHLGIRKIMR…HSIHSVKFNS (313 aa)) are Cytoplasmic-facing. 2 disordered regions span residues 306 to 359 (PQPR…SSFG) and 379 to 424 (PSFA…DRSR). Basic and acidic residues predominate over residues 317 to 328 (NGKKDWSEKDQH). Residues 344–359 (AGNQHLGQQSDHSSFG) are compositionally biased toward polar residues. Positions 400–413 (TDLHSHCRDSEGSM) are enriched in basic and acidic residues.

The protein belongs to the connexin family. Alpha-type (group II) subfamily. As to quaternary structure, a connexon is composed of a hexamer of connexins. In terms of tissue distribution, expressed in skeletal muscle and heart.

The protein resides in the cell membrane. Its subcellular location is the cell junction. The protein localises to the gap junction. One gap junction consists of a cluster of closely packed pairs of transmembrane channels, the connexons, through which materials of low MW diffuse from one cell to a neighboring cell. Involved in tracer coupling between horizontal cells of the retina. May play a role in the regulation of horizontal cell patterning. In Homo sapiens (Human), this protein is Gap junction alpha-10 protein (GJA10).